Reading from the N-terminus, the 125-residue chain is U11-myrmicitoxin-Ta1a (125 aa).

An N-terminal signal peptide occupies residues 1 to 21 (MKTVIFILGFAFVAILIPTNG). The propeptide occupies 22–91 (ESMADADAMA…RAMAAAYAAA (70 aa)). Cys-101 and Cys-124 form a disulfide bridge.

Belongs to the formicidae venom precursor-01 superfamily. Expressed by the venom gland.

It is found in the secreted. Its subcellular location is the target cell membrane. Neurotoxin that causes irreversible rapid flaccid paralysis in blowflies and honeybees upon intrathoracic injection. Causes a quick and irreversible cytolytic effect (at 10 uM) indicating it possibly acts as a pore-forming peptide. Shows only weak effect on aphids (A.pisum) at high doses 24 hours post intrathoracic injection. In vitro, is not cytotoxic on the dipteran S2 Drosophila embryonic cell line. This is U11-myrmicitoxin-Ta1a from Tetramorium africanum (Fierce ant).